A 435-amino-acid chain; its full sequence is Transcriptional enhancer factor TEF-5 (435 aa).

Residues 1–12 (MASNSWNASSSP) are compositionally biased toward polar residues. The tract at residues 1-34 (MASNSWNASSSPGEAREDGPEGLDKGLDNDAEGV) is disordered. An N-acetylalanine modification is found at alanine 2. Positions 14–28 (EAREDGPEGLDKGLD) are enriched in basic and acidic residues. Residues 28–104 (DNDAEGVWSP…QVLARKKVRE (77 aa)) constitute a DNA-binding region (TEA). The residue at position 148 (serine 148) is a Phosphoserine. The transcriptional activation stretch occupies residues 173 to 435 (GPSQDIKPFA…QHHVYKLVKD (263 aa)).

Interacts with YAP1 and WWTR1/TAZ. As to expression, preferentially expressed in the placenta.

It localises to the nucleus. Its function is as follows. Transcription factor which plays a key role in the Hippo signaling pathway, a pathway involved in organ size control and tumor suppression by restricting proliferation and promoting apoptosis. The core of this pathway is composed of a kinase cascade wherein MST1/MST2, in complex with its regulatory protein SAV1, phosphorylates and activates LATS1/2 in complex with its regulatory protein MOB1, which in turn phosphorylates and inactivates YAP1 oncoprotein and WWTR1/TAZ. Acts by mediating gene expression of YAP1 and WWTR1/TAZ, thereby regulating cell proliferation, migration and epithelial mesenchymal transition (EMT) induction. Binds to multiple functional elements of the human chorionic somatomammotropin-B gene enhancer. This is Transcriptional enhancer factor TEF-5 (TEAD3) from Homo sapiens (Human).